The following is a 414-amino-acid chain: MSRKIHGGSVVEMQGDEMTRIIWELIKEKLILPYVELDLHSYDLGIENRDATNDQVTKDAAEAIKKYNVGVKCATITPDEKRVEEFKLKQMWKSPNGTIRNILGGTVFREAIICKNIPRLVTGWVKPIIIGRHAYGDQYRATDFVVPGPGKVEITYTPKDGSQKVTYLVHDFEEGGGVAMGMYNQDKSIEDFAHSSFQMALSKGWPLYLSTKNTILKKYDGRFKDIFQEIYDKQYKSKFEAQKIWYEHRLIDDMVAQAMKSEGGFIWACKNYDGDVQSDSVAQGYGSLGMMTSVLICPDGKTVEAEAAHGTVTRHYRMYQKGQETSTNPIASIFAWSRGLAHRAKLDNNTELSFFANALEEVCIETIEAGFMTKDLAACIKGLPNVQRSDYLNTFEFMDKLGENLKAKLAQAKL.

Ser-2 bears the N-acetylserine mark. At Tyr-42 the chain carries Phosphotyrosine. Residue 75-77 participates in NADP(+) binding; the sequence is TIT. Thr-77 is a binding site for substrate. At Lys-81 the chain carries N6-acetyllysine. Arg-82 contacts NADP(+). Substrate contacts are provided by residues 94 to 100 and Arg-109; that span reads SPNGTIR. N6-succinyllysine is present on Lys-126. Residues Arg-132 and Lys-212 each coordinate substrate. Lys-224, Lys-233, and Lys-243 each carry N6-acetyllysine. Asp-252 lines the Mn(2+) pocket. Position 260 (Lys-260) interacts with NADP(+). Positions 275 and 279 each coordinate Mn(2+). 310–315 serves as a coordination point for NADP(+); sequence GTVTRH. An N6-acetyllysine modification is found at Lys-321. An NADP(+)-binding site is contributed by Asn-328. At Ser-389 the chain carries Phosphoserine. Lys-400 carries the N6-succinyllysine modification.

This sequence belongs to the isocitrate and isopropylmalate dehydrogenases family. Homodimer. The cofactor is Mg(2+). Requires Mn(2+) as cofactor. Post-translationally, the N-terminus is blocked. Acetylation at Lys-374 dramatically reduces catalytic activity. Ubiquitous.

The protein resides in the cytoplasm. Its subcellular location is the cytosol. It is found in the peroxisome. The catalysed reaction is D-threo-isocitrate + NADP(+) = 2-oxoglutarate + CO2 + NADPH. In terms of biological role, catalyzes the NADP(+)-dependent oxidative decarboxylation of isocitrate (D-threo-isocitrate) to 2-ketoglutarate (2-oxoglutarate), which is required by other enzymes such as the phytanoyl-CoA dioxygenase. Plays a critical role in the generation of NADPH, an important cofactor in many biosynthesis pathways. May act as a corneal epithelial crystallin and may be involved in maintaining corneal epithelial transparency. The protein is Isocitrate dehydrogenase [NADP] cytoplasmic (Idh1) of Rattus norvegicus (Rat).